Consider the following 1217-residue polypeptide: Endonuclease YhcR (1217 aa).

Positions 1–46 (MLSVEMISRQNRCHYVYKGGNMMRRILHIVLITALMFLNVMYTFEA) are cleaved as a signal peptide. In terms of domain architecture, TNase-like spans 376–517 (GEYEGIVDRV…KKDQKGIWNE (142 aa)). Active-site residues include Arg404, Glu412, and Arg460. The tract at residues 590–828 (LRILSMNDLH…VIFAAHNHQV (239 aa)) is phosphoesterase. 6 residues coordinate a divalent metal cation: Asp597, His599, Asp647, Asn680, His792, and His824. The interval 829–1085 (VNGEVNGKLI…AYTKEGRIKL (257 aa)) is 5'-nucleotidase. Substrate is bound by residues Phe965 and 1035-1042 (FMATATGA). The disordered stretch occupies residues 1087–1142 (EASDIEDPVTEDPITEEPGDDPGTEDPIKEDPRPGEDLPDIKETPGTAPVHQLPPS). Positions 1089–1110 (SDIEDPVTEDPITEEPGDDPGT) are enriched in acidic residues. The segment covering 1112-1129 (DPIKEDPRPGEDLPDIKE) has biased composition (basic and acidic residues). The LPXTG sorting signal signature appears at 1182–1186 (LPDTS). Position 1185 is a pentaglycyl murein peptidoglycan amidated threonine (Thr1185). The propeptide at 1186–1217 (SAGYYNFMVIGAAVTLSGTYLYVRRKRSASRT) is removed by sortase.

It in the C-terminal section; belongs to the 5'-nucleotidase family. Ca(2+) is required as a cofactor. Requires Mn(2+) as cofactor.

It localises to the secreted. The protein localises to the cell wall. With respect to regulation, requires a minimum of 0.1 mM of calcium for a significant activity. Maximal activity was observed with concentrations of calcium between 1 to 5 mM. Is 10-fold less active with the corresponding concentrations of manganese. Inhibited by NaCl at concentrations of 100 mM and higher. Sugar-nonspecific endonuclease that yields nucleotide 3'-monophosphate products. No 5'-nucleotidase activity was detected, using 5'-AMP as the substrate, in the presence of diverse divalent metals and with various pH values. The chain is Endonuclease YhcR (yhcR) from Bacillus subtilis (strain 168).